Reading from the N-terminus, the 938-residue chain is E3 ubiquitin-protein ligase CBL-B (938 aa).

A 4H region spans residues 35–167; the sequence is PPKQAAADRR…KAIFPNGQFQ (133 aa). In terms of domain architecture, Cbl-PTB spans 35 to 343; that stretch reads PPKQAAADRR…GRSYNPDLTG (309 aa). Residues 168–240 form an EF-hand-like region; that stretch reads GDNFRITKAD…FEFDIFTRLF (73 aa). Ca(2+)-binding residues include Asp221, Thr223, Asn225, Tyr227, and Glu232. The interval 241–343 is SH2-like; it reads QPWGSILRNW…GRSYNPDLTG (103 aa). A Phosphoserine; by PKC/PRKCQ modification is found at Ser282. Arg286 is a 4-O-phospho-L-tyrosine binding site. The segment at 344–372 is linker; sequence LCEPTPHDHIKVTQEQYELYCEMGSTFQL. Position 363 is a phosphotyrosine (Tyr363). Residues 373–412 form an RING-type zinc finger; it reads CKICAENDKDVKIEPCGHLMCTSCLTAWQESDGQGCPFCR. A disordered region spans residues 465–588; it reads ASVRKCTDRQ…SVPSRDQPMP (124 aa). Residues 473 to 486 show a composition bias toward polar residues; that stretch reads RQNSPVTSPGSSPL. Phosphoserine is present on residues Ser476, Ser480, Ser484, Ser521, Ser525, and Ser529. Residues 543 to 567 are interaction with VAV1; it reads PLPAPPPPLRDPPPPPERPPPIPPD. A compositionally biased stretch (pro residues) spans 544–566; that stretch reads LPAPPPPLRDPPPPPERPPPIPP. Position 633 is a phosphoserine (Ser633). Phosphotyrosine occurs at positions 664 and 708. Disordered stretches follow at residues 702–725 and 771–885; these read EEDDDEYKIPSSHPVSLNSQPSHC and DALP…EAAL. Polar residues predominate over residues 714 to 724; that stretch reads HPVSLNSQPSH. Residues 775-784 are compositionally biased toward pro residues; it reads PSLPPPPPPA. The span at 794–804 shows a compositional bias: low complexity; it reads PPGSSSRPSSG. Polar residues predominate over residues 839–855; sequence NRASQDYDQLPSSSDGS. The residue at position 845 (Tyr845) is a Phosphotyrosine. Residues 847–883 form an interaction with SH3KBP1 region; sequence QLPSSSDGSQAPARPPKPRPRRTAPEIHHRKPHGPEA. The span at 862–878 shows a compositional bias: basic residues; the sequence is PKPRPRRTAPEIHHRKP. A UBA domain is found at 887–926; that stretch reads NVDAKIAKLMGEGYAFEEVKRALEIAQNNLEVARSILREF.

As to quaternary structure, interacts with SH3 domain-containing proteins LCK, CRK and SORBS1. Interacts with LCP2 and ZAP70. Interacts with CBL. Interacts with SH3 domain-containing proteins VAV1, FYN, FGR, PLCG1, GRB2, CRKL, PIK3R1 and SH3KBP1/CIN85. Identified in heterotrimeric complexes with SH3KBP1/CIN85, CD2AP and ARHGEF7, where one CBLB peptide binds two copies of the other protein. Interacts with poly-ubiquitinated proteins. Dimerization is required for the binding of poly-ubiquitin, but not for the binding of mono-ubiquitin. Interacts with EGFR (phosphorylated). Interacts with IFT20. Post-translationally, phosphorylated on tyrosine and serine residues upon TCR or BCR activation, and upon various types of cell stimulation. In terms of processing, auto-ubiquitinated upon EGF-mediated cell activation or upon T-cell costimulation by CD28; which promotes proteasomal degradation.

Its subcellular location is the cytoplasm. It carries out the reaction S-ubiquitinyl-[E2 ubiquitin-conjugating enzyme]-L-cysteine + [acceptor protein]-L-lysine = [E2 ubiquitin-conjugating enzyme]-L-cysteine + N(6)-ubiquitinyl-[acceptor protein]-L-lysine.. It participates in protein modification; protein ubiquitination. E3 ubiquitin-protein ligase which accepts ubiquitin from specific E2 ubiquitin-conjugating enzymes, and transfers it to substrates, generally promoting their degradation by the proteasome. Negatively regulates TCR (T-cell receptor), BCR (B-cell receptor) and FCER1 (high affinity immunoglobulin epsilon receptor) signal transduction pathways. In naive T-cells, inhibits VAV1 activation upon TCR engagement and imposes a requirement for CD28 costimulation for proliferation and IL-2 production. Also acts by promoting PIK3R1/p85 ubiquitination, which impairs its recruitment to the TCR and subsequent activation. In activated T-cells, inhibits PLCG1 activation and calcium mobilization upon restimulation and promotes anergy. In B-cells, acts by ubiquitinating SYK and promoting its proteasomal degradation. Slightly promotes SRC ubiquitination. May be involved in EGFR ubiquitination and internalization. May be functionally coupled with the E2 ubiquitin-protein ligase UB2D3. In association with CBL, required for proper feedback inhibition of ciliary platelet-derived growth factor receptor-alpha (PDGFRA) signaling pathway via ubiquitination and internalization of PDGFRA. This chain is E3 ubiquitin-protein ligase CBL-B (Cblb), found in Rattus norvegicus (Rat).